We begin with the raw amino-acid sequence, 501 residues long: Ribose import ATP-binding protein RbsA (501 aa).

2 ABC transporter domains span residues 5–241 (LQLK…VGRK) and 252–495 (APGE…VGKL). 37-44 (GENGAGKS) contacts ATP.

It belongs to the ABC transporter superfamily. Ribose importer (TC 3.A.1.2.1) family. The complex is composed of an ATP-binding protein (RbsA), two transmembrane proteins (RbsC) and a solute-binding protein (RbsB).

The protein localises to the cell inner membrane. The catalysed reaction is D-ribose(out) + ATP + H2O = D-ribose(in) + ADP + phosphate + H(+). Its function is as follows. Part of the ABC transporter complex RbsABC involved in ribose import. Responsible for energy coupling to the transport system. This chain is Ribose import ATP-binding protein RbsA, found in Salmonella paratyphi A (strain ATCC 9150 / SARB42).